The primary structure comprises 356 residues: Phospho-N-acetylmuramoyl-pentapeptide-transferase (356 aa).

10 consecutive transmembrane segments (helical) span residues 4-24 (ILLA…WFIH), 53-73 (GGAV…LVTW), 76-96 (PSIS…IGFL), 116-136 (LLGQ…FPDV), 152-172 (ISWL…LIAG), 186-206 (LATG…IWQF), 228-248 (DIAV…WWNA), 253-273 (IFLG…MAVV), 278-298 (LLLV…MLQV), and 333-353 (FWII…AEWV).

The protein belongs to the glycosyltransferase 4 family. MraY subfamily. It depends on Mg(2+) as a cofactor.

It localises to the cell membrane. It catalyses the reaction UDP-N-acetyl-alpha-D-muramoyl-L-alanyl-gamma-D-glutamyl-meso-2,6-diaminopimeloyl-D-alanyl-D-alanine + di-trans,octa-cis-undecaprenyl phosphate = di-trans,octa-cis-undecaprenyl diphospho-N-acetyl-alpha-D-muramoyl-L-alanyl-D-glutamyl-meso-2,6-diaminopimeloyl-D-alanyl-D-alanine + UMP. It participates in cell wall biogenesis; peptidoglycan biosynthesis. Catalyzes the initial step of the lipid cycle reactions in the biosynthesis of the cell wall peptidoglycan: transfers peptidoglycan precursor phospho-MurNAc-pentapeptide from UDP-MurNAc-pentapeptide onto the lipid carrier undecaprenyl phosphate, yielding undecaprenyl-pyrophosphoryl-MurNAc-pentapeptide, known as lipid I. This chain is Phospho-N-acetylmuramoyl-pentapeptide-transferase, found in Cutibacterium acnes (strain DSM 16379 / KPA171202) (Propionibacterium acnes).